The primary structure comprises 477 residues: Methionine aminopeptidase 2 (477 aa).

Positions 1–121 are disordered; that stretch reads MAGVEEAASC…TDPPSVPICD (121 aa). Alanine 2 is modified (N-acetylalanine). Positions 36–46 are enriched in basic residues; the sequence is KKKKRKKKKSK. Serine 45 carries the phosphoserine modification. The span at 54-78 shows a compositional bias: basic and acidic residues; that stretch reads EPDKEAGASVDEVTRQLERQALEEK. Serine 62 bears the Phosphoserine; alternate mark. Residue serine 62 is glycosylated (O-linked (GlcNAc) serine; alternate). The span at 79–91 shows a compositional bias: acidic residues; sequence EKDDDDEDGDGDG. A compositionally biased stretch (basic residues) spans 96 to 108; that stretch reads GKKKKKKKKKRGP. Histidine 230 serves as a coordination point for substrate. Residues aspartate 250, aspartate 261, and histidine 330 each coordinate a divalent metal cation. Residue histidine 338 participates in substrate binding. A divalent metal cation contacts are provided by glutamate 363 and glutamate 458.

It belongs to the peptidase M24A family. Methionine aminopeptidase eukaryotic type 2 subfamily. In terms of assembly, binds EIF2S1 at low magnesium concentrations. Interacts strongly with the eIF-2 gamma-subunit EIF2S3. Co(2+) is required as a cofactor. It depends on Zn(2+) as a cofactor. Mn(2+) serves as cofactor. The cofactor is Fe(2+). Post-translationally, contains approximately 12 O-linked N-acetylglucosamine (GlcNAc) residues. O-glycosylation is required for EIF2S1 binding.

Its subcellular location is the cytoplasm. The catalysed reaction is Release of N-terminal amino acids, preferentially methionine, from peptides and arylamides.. In terms of biological role, cotranslationally removes the N-terminal methionine from nascent proteins. The N-terminal methionine is often cleaved when the second residue in the primary sequence is small and uncharged (Met-Ala-, Cys, Gly, Pro, Ser, Thr, or Val). Its function is as follows. Protects eukaryotic initiation factor EIF2S1 from translation-inhibiting phosphorylation by inhibitory kinases such as EIF2AK2/PKR and EIF2AK1/HCR. Plays a critical role in the regulation of protein synthesis. The chain is Methionine aminopeptidase 2 from Bos taurus (Bovine).